The chain runs to 564 residues: MRRIGAITALSLPVLLSLLYSCGTGGSASKEEILSKKEHNPEPNIPLECYTDTGVVKLGKAIANPCYVCHTKALTPYENEVDDFDLQLVYDFPEEIKEMGNPWLNAIKPELTIGSVPMPSDEEIKTWIRQDNWSKAYAEKGKGELVYFPDIPPIYKYENGSYELINVDKEGFVRDPETGEYTGWRVFKWKPFPGFFPTNGRIDSTFIRLPEKFRKKNGEFDLNLYKKNLAILECAMKGVAPGETCSGTEVGDFIMPFRYEGDASDVEVVVYQYPPGTEFAHPLYYLDPENTLSFKSLRIKEMRYMKKLAYADTRTGTGEEEEEEGTFFWDKGRFFNDSGYWEMRAFIEDKNGYLRPQSPEESKFCIACHGGIGGTVDGTFTLWRKIPGEEGWKEQDYKNIKDYRYKAITCENLDSLEMGEEVKKALEAYCSKVGESPGEYTVYFALTAGGDHFRSNYEILQDISVDGKVDLELLYNPEKIKFIDNSGFIKPELFFPEPERAYGIDKQYYRIVKAQAFIYGRDVFEKAFGISSGGNSLEELDNLESTGVKESGIWNFVKNFLSSE.

A signal peptide spans 1–21 (MRRIGAITALSLPVLLSLLYS). A lipid anchor (N-palmitoyl cysteine) is attached at Cys-22. Cys-22 carries the S-diacylglycerol cysteine lipid modification.

It localises to the cell membrane. This is an uncharacterized protein from Aquifex aeolicus (strain VF5).